The primary structure comprises 302 residues: MADRRVLFVHAHPDDESIETGATIARYAAEGAHVTLVTCTLGEEGEIIPPELAHHAADRDDTLGRYRIGELAAACAALGVTDHRFLGGVGRWRDSGMMGAPSNLRPDCFWQADLDEAAAELVKVIREVRPQVLVTYDENGTYGHPDHIKAHRVSWRAYELAADPAFPGGEPWRIAKVYHTAQPRSVLRRGVEAMRGADMPFTRVASVDELPFGCDDAQVTTEIDARAHLPAKFAALRAHATQVMVHEPWFALSNGIGREVLGVEFFTLKAGTPGPRVAGVPAGEGGLGGPRLLETDLFAGIG.

Zn(2+) contacts are provided by His12, Asp15, and His147.

This sequence belongs to the MshB deacetylase family. It depends on Zn(2+) as a cofactor.

The enzyme catalyses 1D-myo-inositol 2-acetamido-2-deoxy-alpha-D-glucopyranoside + H2O = 1D-myo-inositol 2-amino-2-deoxy-alpha-D-glucopyranoside + acetate. Functionally, catalyzes the deacetylation of 1D-myo-inositol 2-acetamido-2-deoxy-alpha-D-glucopyranoside (GlcNAc-Ins) in the mycothiol biosynthesis pathway. The protein is 1D-myo-inositol 2-acetamido-2-deoxy-alpha-D-glucopyranoside deacetylase of Thermobispora bispora (strain ATCC 19993 / DSM 43833 / CBS 139.67 / JCM 10125 / KCTC 9307 / NBRC 14880 / R51).